A 384-amino-acid chain; its full sequence is Flap endonuclease 1 (384 aa).

Residues 1-105 are N-domain; the sequence is MGIKGLTKLL…GELAKRKDKR (105 aa). Asp-34 serves as a coordination point for Mg(2+). Position 71 (Arg-71) interacts with DNA. Residues Asp-87, Glu-159, Glu-161, Asp-180, and Asp-182 each coordinate Mg(2+). An I-domain region spans residues 123–254; that stretch reads EIEKLSKRTV…VNALKYIKQY (132 aa). Glu-159 contributes to the DNA binding site. DNA contacts are provided by Gly-232 and Asp-234. Asp-234 contacts Mg(2+). Residues 337-345 are interaction with PCNA; the sequence is GQNRLETFF. The disordered stretch occupies residues 353-384; it reads STVGKRKEPEKGKGKFGAAGGKKSKGVTKRKF. Over residues 374–384 the composition is skewed to basic residues; it reads KKSKGVTKRKF.

It belongs to the XPG/RAD2 endonuclease family. FEN1 subfamily. As to quaternary structure, interacts with PCNA. Three molecules of FEN1 bind to one PCNA trimer with each molecule binding to one PCNA monomer. PCNA stimulates the nuclease activity without altering cleavage specificity. It depends on Mg(2+) as a cofactor. Phosphorylated. Phosphorylation upon DNA damage induces relocalization to the nuclear plasma.

It is found in the nucleus. Its subcellular location is the nucleolus. It localises to the nucleoplasm. The protein resides in the mitochondrion. In terms of biological role, structure-specific nuclease with 5'-flap endonuclease and 5'-3' exonuclease activities involved in DNA replication and repair. During DNA replication, cleaves the 5'-overhanging flap structure that is generated by displacement synthesis when DNA polymerase encounters the 5'-end of a downstream Okazaki fragment. It enters the flap from the 5'-end and then tracks to cleave the flap base, leaving a nick for ligation. Also involved in the long patch base excision repair (LP-BER) pathway, by cleaving within the apurinic/apyrimidinic (AP) site-terminated flap. Acts as a genome stabilization factor that prevents flaps from equilibrating into structures that lead to duplications and deletions. Also possesses 5'-3' exonuclease activity on nicked or gapped double-stranded DNA, and exhibits RNase H activity. Also involved in replication and repair of rDNA and in repairing mitochondrial DNA. This chain is Flap endonuclease 1, found in Micromonas commoda (strain RCC299 / NOUM17 / CCMP2709) (Picoplanktonic green alga).